The primary structure comprises 371 residues: Glutamate 5-kinase (371 aa).

Residue lysine 14 participates in ATP binding. Substrate-binding residues include serine 52, aspartate 139, and asparagine 151. 171 to 172 (SD) serves as a coordination point for ATP. Positions 275-353 (EGRLHLDSGA…ADLAMELGPS (79 aa)) constitute a PUA domain.

The protein belongs to the glutamate 5-kinase family.

It is found in the cytoplasm. The enzyme catalyses L-glutamate + ATP = L-glutamyl 5-phosphate + ADP. Its pathway is amino-acid biosynthesis; L-proline biosynthesis; L-glutamate 5-semialdehyde from L-glutamate: step 1/2. In terms of biological role, catalyzes the transfer of a phosphate group to glutamate to form L-glutamate 5-phosphate. This is Glutamate 5-kinase from Frankia casuarinae (strain DSM 45818 / CECT 9043 / HFP020203 / CcI3).